The following is a 228-amino-acid chain: Lipoprotein-releasing system ATP-binding protein LolD (228 aa).

Residues 6 to 225 form the ABC transporter domain; the sequence is LEAKDVYKHF…ILHMQDGLWV (220 aa). 42-49 is a binding site for ATP; that stretch reads GASGSGKS.

The protein belongs to the ABC transporter superfamily. Lipoprotein translocase (TC 3.A.1.125) family. As to quaternary structure, the complex is composed of two ATP-binding proteins (LolD) and two transmembrane proteins (LolC and LolE).

It localises to the cell inner membrane. Part of the ABC transporter complex LolCDE involved in the translocation of mature outer membrane-directed lipoproteins, from the inner membrane to the periplasmic chaperone, LolA. Responsible for the formation of the LolA-lipoprotein complex in an ATP-dependent manner. The polypeptide is Lipoprotein-releasing system ATP-binding protein LolD (Acinetobacter baylyi (strain ATCC 33305 / BD413 / ADP1)).